Consider the following 304-residue polypeptide: Fructose permease IIC component (304 aa).

Positions 1 to 304 constitute a PTS EIIC type-2 domain; it reads IHSADPKDPT…GIIKKPVEEK (304 aa). The next 8 helical transmembrane spans lie at 20-40, 62-82, 98-118, 140-160, 181-201, 214-234, 238-258, and 277-297; these read FIGS…FIAM, NAGF…VILL, PVLI…QFVI, NLVL…GGPL, AAIM…TTFF, ITCY…FAAA, VIPA…FFRV, and LLYL…LGII.

The protein resides in the cell membrane. Its function is as follows. The phosphoenolpyruvate-dependent sugar phosphotransferase system (PTS), a major carbohydrate active -transport system, catalyzes the phosphorylation of incoming sugar substrates concomitant with their translocation across the cell membrane. This system is involved in fructose transport. The protein is Fructose permease IIC component (fruA) of Bacillus amyloliquefaciens (Bacillus velezensis).